The chain runs to 177 residues: Large ribosomal subunit protein uL6 (177 aa).

This sequence belongs to the universal ribosomal protein uL6 family. In terms of assembly, part of the 50S ribosomal subunit.

Functionally, this protein binds to the 23S rRNA, and is important in its secondary structure. It is located near the subunit interface in the base of the L7/L12 stalk, and near the tRNA binding site of the peptidyltransferase center. In Aromatoleum aromaticum (strain DSM 19018 / LMG 30748 / EbN1) (Azoarcus sp. (strain EbN1)), this protein is Large ribosomal subunit protein uL6.